A 171-amino-acid chain; its full sequence is Neudesin (171 aa).

A signal peptide spans 1-30; the sequence is MARPAPWWWLRPLAALALALALVRVPSARA. Residues 43–128 form the Cytochrome b5 heme-binding domain; the sequence is VRLFTEEELA…KELEALDDIF (86 aa). Lys135 is subject to N6-acetyllysine. The interval 151 to 171 is disordered; that stretch reads GSPNLDFKPEDQPHFDIKDEF. Over residues 157–171 the composition is skewed to basic and acidic residues; sequence FKPEDQPHFDIKDEF.

The protein belongs to the cytochrome b5 family. MAPR subfamily. As to quaternary structure, interacts with PINK1 and PARK7.

It localises to the secreted. The protein localises to the extracellular space. The protein resides in the mitochondrion. Its subcellular location is the endoplasmic reticulum. Acts as a neurotrophic factor in postnatal mature neurons enhancing neuronal survival. Promotes cell proliferation and neurogenesis in undifferentiated neural progenitor cells at the embryonic stage and inhibits differentiation of astrocytes. Its neurotrophic activity is exerted via MAPK1/ERK2, MAPK3/ERK1 and AKT1/AKT pathways. Neurotrophic activity is enhanced by binding to heme. Also acts as an anorexigenic neurotrophic factor that contributes to energy balance. This chain is Neudesin, found in Rattus norvegicus (Rat).